Consider the following 2364-residue polypeptide: Actin-binding protein F (2364 aa).

Residues 138-157 (THQTSPTTETTTTPSSSSSS) are compositionally biased toward low complexity. Disordered stretches follow at residues 138–168 (THQT…STLD), 1087–1111 (QASK…EKRR), 1412–1435 (NNNS…RAPM), and 1929–2088 (KLIS…SEFN). Positions 1092–1111 (NESEVKDEKSMRNRQVEKRR) are enriched in basic and acidic residues. Composition is skewed to low complexity over residues 1412-1428 (NNNS…NSFG) and 1932-1960 (SSST…TTTD). A coiled-coil region spans residues 1960–2017 (DSSKDKKKLEKEEKQREKERKQKEKEDKKREKEELKKKEKEEKKKKEEEKKLKKKSGS). Residues 1961–2010 (SSKDKKKLEKEEKQREKERKQKEKEDKKREKEELKKKEKEEKKKKEEEKK) are compositionally biased toward basic and acidic residues. Residues 2027–2047 (ATPTTTTTTEATTTTTTTTAT) show a composition bias toward low complexity. Residues 2052-2070 (IKPEKIASDDEHDDHHHDE) show a composition bias toward basic and acidic residues. The span at 2071–2081 (HDEEDDDDEPL) shows a compositional bias: acidic residues. Positions 2129–2173 (VQRWNSLFKDLRNKVDQVSNKDSVEIDYEKEIDRERRQNKMASNE) form a coiled coil.

As to quaternary structure, interacts with actin.

The protein resides in the nucleus. The protein localises to the cytoplasm. It is found in the cytoskeleton. The chain is Actin-binding protein F (abpF) from Dictyostelium discoideum (Social amoeba).